Consider the following 292-residue polypeptide: 4-hydroxy-tetrahydrodipicolinate synthase (292 aa).

Position 45 (threonine 45) interacts with pyruvate. Residue tyrosine 133 is the Proton donor/acceptor of the active site. Lysine 161 serves as the catalytic Schiff-base intermediate with substrate. Isoleucine 203 provides a ligand contact to pyruvate.

This sequence belongs to the DapA family. As to quaternary structure, homotetramer; dimer of dimers.

It is found in the cytoplasm. The enzyme catalyses L-aspartate 4-semialdehyde + pyruvate = (2S,4S)-4-hydroxy-2,3,4,5-tetrahydrodipicolinate + H2O + H(+). It functions in the pathway amino-acid biosynthesis; L-lysine biosynthesis via DAP pathway; (S)-tetrahydrodipicolinate from L-aspartate: step 3/4. Functionally, catalyzes the condensation of (S)-aspartate-beta-semialdehyde [(S)-ASA] and pyruvate to 4-hydroxy-tetrahydrodipicolinate (HTPA). This Vibrio vulnificus (strain CMCP6) protein is 4-hydroxy-tetrahydrodipicolinate synthase.